A 196-amino-acid polypeptide reads, in one-letter code: ATP-dependent Clp protease proteolytic subunit (196 aa).

Residue Ser101 is the Nucleophile of the active site. His126 is a catalytic residue.

Belongs to the peptidase S14 family. As to quaternary structure, component of the chloroplastic Clp protease core complex.

It is found in the plastid. It localises to the chloroplast stroma. It carries out the reaction Hydrolysis of proteins to small peptides in the presence of ATP and magnesium. alpha-casein is the usual test substrate. In the absence of ATP, only oligopeptides shorter than five residues are hydrolyzed (such as succinyl-Leu-Tyr-|-NHMec, and Leu-Tyr-Leu-|-Tyr-Trp, in which cleavage of the -Tyr-|-Leu- and -Tyr-|-Trp bonds also occurs).. Functionally, cleaves peptides in various proteins in a process that requires ATP hydrolysis. Has a chymotrypsin-like activity. Plays a major role in the degradation of misfolded proteins. The chain is ATP-dependent Clp protease proteolytic subunit from Lotus japonicus (Lotus corniculatus var. japonicus).